Consider the following 4318-residue polypeptide: Cytoplasmic dynein 2 heavy chain 1 (4318 aa).

Positions M1–Q1658 are stem. An ATP-binding site is contributed by L147–Q154. 2 coiled-coil regions span residues D1328 to W1354 and L1402 to L1431. 4 AAA regions span residues Y1659–G1883, D1951–D2171, A2261–G2515, and T2623–V2871. G1697–T1704 is an ATP binding site. Residues E1959 to V1986 adopt a coiled-coil conformation. Residues G1989 to S1996, G2301 to G2308, and G2661 to R2668 contribute to the ATP site. The segment at D2888–I3176 is stalk. 2 coiled-coil regions span residues V2908–E2989 and Q3423–E3480. AAA stretches follow at residues L3251–Q3487 and M3699–R3914.

Belongs to the dynein heavy chain family. As to quaternary structure, the cytoplasmic dynein complex 2 is probably composed by a heavy chain DYH1B homodimer and a number of light intermediate chains.

Its subcellular location is the cytoplasm. It is found in the cytoskeleton. It localises to the cilium axoneme. The protein localises to the cell membrane. In terms of biological role, may function as a motor for intraflagellar retrograde transport. Functions in cilia biogenesis. The polypeptide is Cytoplasmic dynein 2 heavy chain 1 (DYH1B) (Tripneustes gratilla (Hawaian sea urchin)).